The sequence spans 177 residues: Large ribosomal subunit protein uL6 (177 aa).

The segment covering 154 to 171 has biased composition (basic and acidic residues); sequence PEPYKGKGVRYADEQVRR. The disordered stretch occupies residues 154-177; it reads PEPYKGKGVRYADEQVRRKEAKKK.

The protein belongs to the universal ribosomal protein uL6 family. Part of the 50S ribosomal subunit.

In terms of biological role, this protein binds to the 23S rRNA, and is important in its secondary structure. It is located near the subunit interface in the base of the L7/L12 stalk, and near the tRNA binding site of the peptidyltransferase center. This Marinobacter nauticus (strain ATCC 700491 / DSM 11845 / VT8) (Marinobacter aquaeolei) protein is Large ribosomal subunit protein uL6.